Reading from the N-terminus, the 439-residue chain is Proline--tRNA ligase (439 aa).

The protein belongs to the class-II aminoacyl-tRNA synthetase family. ProS type 2 subfamily. As to quaternary structure, homodimer.

It is found in the cytoplasm. It carries out the reaction tRNA(Pro) + L-proline + ATP = L-prolyl-tRNA(Pro) + AMP + diphosphate. Catalyzes the attachment of proline to tRNA(Pro) in a two-step reaction: proline is first activated by ATP to form Pro-AMP and then transferred to the acceptor end of tRNA(Pro). In Bradyrhizobium diazoefficiens (strain JCM 10833 / BCRC 13528 / IAM 13628 / NBRC 14792 / USDA 110), this protein is Proline--tRNA ligase.